Reading from the N-terminus, the 141-residue chain is Nucleoside diphosphate kinase (141 aa).

Positions 11, 59, 87, 93, 104, and 114 each coordinate ATP. Residue histidine 117 is the Pros-phosphohistidine intermediate of the active site.

The protein belongs to the NDK family. Homotetramer. Requires Mg(2+) as cofactor.

It is found in the cytoplasm. It catalyses the reaction a 2'-deoxyribonucleoside 5'-diphosphate + ATP = a 2'-deoxyribonucleoside 5'-triphosphate + ADP. It carries out the reaction a ribonucleoside 5'-diphosphate + ATP = a ribonucleoside 5'-triphosphate + ADP. In terms of biological role, major role in the synthesis of nucleoside triphosphates other than ATP. The ATP gamma phosphate is transferred to the NDP beta phosphate via a ping-pong mechanism, using a phosphorylated active-site intermediate. The chain is Nucleoside diphosphate kinase from Pseudomonas putida (strain ATCC 47054 / DSM 6125 / CFBP 8728 / NCIMB 11950 / KT2440).